Consider the following 201-residue polypeptide: Thiamine transporter ThiT (201 aa).

The next 6 membrane-spanning stretches (helical) occupy residues 7–27 (LVVILETAIIAAFAMALTYIP), 29–49 (TTGVSAIELNYGLIPIAVLAM), 53–73 (LVPAAWAGFVWGILDLILRGI), 85–105 (ILEYPIAFTLVGLMGLTFASF), 124–144 (GIIIGTFAKYFIHFIAGVVFW), and 170–190 (TVLTIVVVGVLLTVAPQLFVA).

Belongs to the vitamin uptake transporter (VUT/ECF) (TC 2.A.88) family. Thiamine transporter subfamily. In terms of assembly, in Lactococcus lactis subsp. cremoris (strain NZ9000) forms a stable energy-coupling factor (ECF) transporter complex probably composed of a membrane-embedded substrate-binding protein (S component), two ATP-binding proteins (A components) and a transmembrane protein (T component).

Its subcellular location is the cell membrane. Functionally, thiamine-binding protein that interacts with the energy-coupling factor (ECF) ABC-transporter complex. Unlike classic ABC transporters this ECF transporter provides the energy necessary to transport a number of different substrates. The substrates themselves are bound by transmembrane, not extracytoplasmic soluble proteins and transport it into cells. Binds thiamine with a dissociation constant of 0.5 nM. Upon coexpression with its energy-coupling factor (ECF) ABC-transporter complex EcfA1A2T in Lactococcus lactis subsp. cremoris (strain NZ9000) allows thiamine uptake; uptake requires both ThiT and EcfA1A2T. The chain is Thiamine transporter ThiT (thiT) from Lacticaseibacillus paracasei (strain ATCC 334 / BCRC 17002 / CCUG 31169 / CIP 107868 / KCTC 3260 / NRRL B-441) (Lactobacillus paracasei).